The primary structure comprises 155 residues: Probable methanogenesis regulatory protein FilR2 (155 aa).

The region spanning 18 to 142 is the Response regulatory domain; the sequence is IILLVEDNNA…DLKRTVEEIK (125 aa). At Asp75 the chain carries 4-aspartylphosphate.

Post-translationally, phosphorylated by FilI.

In terms of biological role, member of the two-component regulatory system FilI/FilRs, which is involved in the regulation of methanogenesis. This chain is Probable methanogenesis regulatory protein FilR2, found in Methanothrix harundinacea (strain 6Ac) (Methanosaeta harundinacea).